The primary structure comprises 719 residues: Glutathionylspermidine synthase (719 aa).

The Peptidase C51 domain occupies 54-200; that stretch reads CLPLSSFERK…TESGEVELLD (147 aa). Residue Arg-350 coordinates glutathione. 350–352 lines the ATP pocket; the sequence is RFD. Positions 352, 364, and 366 each coordinate Mg(2+). Glutathione is bound at residue Ser-369. Residue Glu-432 participates in spermidine binding. The glutathione site is built by Glu-433 and Thr-501. Residues Lys-544, Lys-579, Gly-586, Gln-653, and 689 to 691 each bind ATP; that span reads KIT.

It in the C-terminal section; belongs to the glutathionylspermidine synthase preATP-grasp family. Mg(2+) is required as a cofactor. Post-translationally, the N-terminus is blocked.

It catalyses the reaction spermidine + glutathione + ATP = glutathionylspermidine + ADP + phosphate + H(+). Its function is as follows. Conjugates glutathione (gamma-Glu-Cys-Gly) and spermidine to form glutathionylspermidine in the biosynthesis trypanothione (N(1),N(8)-bis(glutathionyl)spermidine), which is involved in maintaining intracellular thiol redox and in defense against oxidants. The sequence is that of Glutathionylspermidine synthase (GSP) from Crithidia fasciculata.